The chain runs to 270 residues: Tryptophan synthase alpha chain (270 aa).

Catalysis depends on proton acceptor residues Glu49 and Asp60.

It belongs to the TrpA family. Tetramer of two alpha and two beta chains.

The catalysed reaction is (1S,2R)-1-C-(indol-3-yl)glycerol 3-phosphate + L-serine = D-glyceraldehyde 3-phosphate + L-tryptophan + H2O. It functions in the pathway amino-acid biosynthesis; L-tryptophan biosynthesis; L-tryptophan from chorismate: step 5/5. The alpha subunit is responsible for the aldol cleavage of indoleglycerol phosphate to indole and glyceraldehyde 3-phosphate. This chain is Tryptophan synthase alpha chain, found in Buchnera aphidicola subsp. Diuraphis noxia.